Consider the following 711-residue polypeptide: GDNF-inducible zinc finger protein 1 (711 aa).

A BTB domain is found at 31–103 (CDVTVSVEYQ…VYTAKVQVEE (73 aa)). Over residues 153 to 168 (SGSQVSAAPAPRASVA) the composition is skewed to low complexity. Disordered regions lie at residues 153–220 (SGSQ…PKIR) and 243–312 (RLRE…EGEK). Basic and acidic residues-rich tracts occupy residues 197-212 (PPKK…KEVV), 243-252 (RLREQQKTAE), and 265-277 (SPDR…EQVS). The span at 298–309 (EEEEEEEEEDEE) shows a compositional bias: acidic residues. C2H2-type zinc fingers lie at residues 317–340 (FKCS…KHRH), 348–371 (YRCD…RHVH), 377–400 (FPCE…LQVH), 407–429 (HRCG…ERTH), 435–457 (YGCT…MRIH), 463–485 (FVCD…KRCH), 491–513 (FMCE…NRIH), 519–541 (FKCE…IKVH), 547–569 (YCCD…RRIH), and 575–597 (FMCN…TSIH). S613 bears the Phosphoserine mark.

It belongs to the krueppel C2H2-type zinc-finger protein family. In terms of assembly, interacts with NCL. In terms of tissue distribution, expressed in adult brain, heart, skeletal muscle, kidney and liver. Also detected in fetal brain and kidney, and at lower levels in fetal lung and liver.

The protein resides in the cytoplasm. Its subcellular location is the nucleus. The protein localises to the nucleoplasm. It is found in the nucleolus. Transcriptional repressor that binds the GZF1 responsive element (GRE) (consensus: 5'-TGCGCN[TG][CA]TATA-3'). May be regulating VSX2/HOX10 expression. The polypeptide is GDNF-inducible zinc finger protein 1 (Homo sapiens (Human)).